Consider the following 184-residue polypeptide: MSIEIANESGIDVPEEDLVSVARFVIGRMDVHPAAELSMVLVDLDTMADLHMRWMDLPGPTDVMSFPMDELEPGGRPDSPEPGPSMLGDIVLCPEFAADQAHKAGHSLEHELALLTVHGVLHLLGYDHAEPEEEKEMFALQARLLEEWYESLREARRRAELAERDARLLGKAGFTAPGDALGPA.

The Zn(2+) site is built by His-118, His-122, and His-128.

It belongs to the endoribonuclease YbeY family. Zn(2+) serves as cofactor.

It localises to the cytoplasm. Functionally, single strand-specific metallo-endoribonuclease involved in late-stage 70S ribosome quality control and in maturation of the 3' terminus of the 16S rRNA. The polypeptide is Endoribonuclease YbeY (Nocardia farcinica (strain IFM 10152)).